Reading from the N-terminus, the 337-residue chain is Ribosomal RNA small subunit methyltransferase H (337 aa).

S-adenosyl-L-methionine-binding positions include 45 to 47 (GGH), D64, H91, D112, and Q119.

This sequence belongs to the methyltransferase superfamily. RsmH family.

The protein resides in the cytoplasm. The catalysed reaction is cytidine(1402) in 16S rRNA + S-adenosyl-L-methionine = N(4)-methylcytidine(1402) in 16S rRNA + S-adenosyl-L-homocysteine + H(+). Specifically methylates the N4 position of cytidine in position 1402 (C1402) of 16S rRNA. This is Ribosomal RNA small subunit methyltransferase H from Cutibacterium acnes (strain DSM 16379 / KPA171202) (Propionibacterium acnes).